Consider the following 163-residue polypeptide: Phosphopantetheine adenylyltransferase (163 aa).

Residue Thr-9 participates in substrate binding. Residues 9-10 and His-17 each bind ATP; that span reads TF. Positions 41, 73, and 87 each coordinate substrate. Residues 88–90, Glu-98, and 123–129 each bind ATP; these read GLR and YQFISGT.

Belongs to the bacterial CoaD family. As to quaternary structure, homohexamer. The cofactor is Mg(2+).

The protein resides in the cytoplasm. The enzyme catalyses (R)-4'-phosphopantetheine + ATP + H(+) = 3'-dephospho-CoA + diphosphate. It participates in cofactor biosynthesis; coenzyme A biosynthesis; CoA from (R)-pantothenate: step 4/5. Reversibly transfers an adenylyl group from ATP to 4'-phosphopantetheine, yielding dephospho-CoA (dPCoA) and pyrophosphate. The polypeptide is Phosphopantetheine adenylyltransferase (Herminiimonas arsenicoxydans).